A 417-amino-acid chain; its full sequence is Serine hydroxymethyltransferase (417 aa).

Residues Leu121 and 125 to 127 (GHL) each bind (6S)-5,6,7,8-tetrahydrofolate. Lys230 bears the N6-(pyridoxal phosphate)lysine mark. Residue 355 to 357 (SPF) coordinates (6S)-5,6,7,8-tetrahydrofolate.

It belongs to the SHMT family. As to quaternary structure, homodimer. Requires pyridoxal 5'-phosphate as cofactor.

Its subcellular location is the cytoplasm. The enzyme catalyses (6R)-5,10-methylene-5,6,7,8-tetrahydrofolate + glycine + H2O = (6S)-5,6,7,8-tetrahydrofolate + L-serine. It functions in the pathway one-carbon metabolism; tetrahydrofolate interconversion. It participates in amino-acid biosynthesis; glycine biosynthesis; glycine from L-serine: step 1/1. In terms of biological role, catalyzes the reversible interconversion of serine and glycine with tetrahydrofolate (THF) serving as the one-carbon carrier. This reaction serves as the major source of one-carbon groups required for the biosynthesis of purines, thymidylate, methionine, and other important biomolecules. Also exhibits THF-independent aldolase activity toward beta-hydroxyamino acids, producing glycine and aldehydes, via a retro-aldol mechanism. This Ruthia magnifica subsp. Calyptogena magnifica protein is Serine hydroxymethyltransferase.